A 364-amino-acid polypeptide reads, in one-letter code: Nicotinate-nucleotide--dimethylbenzimidazole phosphoribosyltransferase (364 aa).

The Proton acceptor role is filled by Glu-332.

It belongs to the CobT family.

The enzyme catalyses 5,6-dimethylbenzimidazole + nicotinate beta-D-ribonucleotide = alpha-ribazole 5'-phosphate + nicotinate + H(+). Its pathway is nucleoside biosynthesis; alpha-ribazole biosynthesis; alpha-ribazole from 5,6-dimethylbenzimidazole: step 1/2. Functionally, catalyzes the synthesis of alpha-ribazole-5'-phosphate from nicotinate mononucleotide (NAMN) and 5,6-dimethylbenzimidazole (DMB). The protein is Nicotinate-nucleotide--dimethylbenzimidazole phosphoribosyltransferase of Salinispora tropica (strain ATCC BAA-916 / DSM 44818 / JCM 13857 / NBRC 105044 / CNB-440).